The primary structure comprises 911 residues: DNA ligase 4 (911 aa).

The ATP site is built by glutamate 271, threonine 272, lysine 273, leucine 274, arginine 278, glutamate 331, lysine 345, phenylalanine 367, glutamate 427, lysine 432, lysine 449, and lysine 451. Lysine 273 acts as the N6-AMP-lysine intermediate in catalysis. Glutamate 331 contacts Mg(2+). Glutamate 427 serves as a coordination point for Mg(2+). The tract at residues 610–620 (LASKHFYVGGD) is required for catalytic activity. BRCT domains are found at residues 654–743 (KISN…PHFM) and 808–911 (SPLS…QYLI).

This sequence belongs to the ATP-dependent DNA ligase family. In terms of assembly, interacts with XRCC4; the LIG4-XRCC4 subcomplex has a 1:2 stoichiometry and XRCC4 is required for LIG4 stability. Component of the core long-range non-homologous end joining (NHEJ) complex (also named DNA-PK complex) composed of PRKDC, LIG4, XRCC4, XRCC6/Ku70, XRCC5/Ku86 and NHEJ1/XLF. Additional component of the NHEJ complex includes PAXX. Following autophosphorylation, PRKDC dissociates from DNA, leading to formation of the short-range NHEJ complex, composed of LIG4, XRCC4, XRCC6/Ku70, XRCC5/Ku86 and NHEJ1/XLF. Interacts with DCLRE1C; the interaction is direct. Interacts with APLF. Mg(2+) is required as a cofactor.

It localises to the nucleus. The enzyme catalyses ATP + (deoxyribonucleotide)n-3'-hydroxyl + 5'-phospho-(deoxyribonucleotide)m = (deoxyribonucleotide)n+m + AMP + diphosphate.. DNA ligase involved in DNA non-homologous end joining (NHEJ); required for double-strand break (DSB) repair and V(D)J recombination. Catalyzes the NHEJ ligation step of the broken DNA during DSB repair by resealing the DNA breaks after the gap filling is completed. Joins single-strand breaks in a double-stranded polydeoxynucleotide in an ATP-dependent reaction. LIG4 is mechanistically flexible: it can ligate nicks as well as compatible DNA overhangs alone, while in the presence of XRCC4, it can ligate ends with 2-nucleotides (nt) microhomology and 1-nt gaps. Forms a subcomplex with XRCC4; the LIG4-XRCC4 subcomplex is responsible for the NHEJ ligation step and XRCC4 enhances the joining activity of LIG4. Binding of the LIG4-XRCC4 complex to DNA ends is dependent on the assembly of the DNA-dependent protein kinase complex DNA-PK to these DNA ends. LIG4 regulates nuclear localization of XRCC4. This is DNA ligase 4 from Pongo abelii (Sumatran orangutan).